Here is a 281-residue protein sequence, read N- to C-terminus: Diaminopimelate epimerase (281 aa).

Residues asparagine 13, glutamine 46, and asparagine 66 each contribute to the substrate site. Cysteine 75 functions as the Proton donor in the catalytic mechanism. Substrate-binding positions include 76-77, asparagine 160, asparagine 193, and 211-212; these read GN and ER. Cysteine 220 (proton acceptor) is an active-site residue. 221 to 222 is a substrate binding site; the sequence is GT.

This sequence belongs to the diaminopimelate epimerase family. As to quaternary structure, homodimer.

The protein resides in the cytoplasm. It catalyses the reaction (2S,6S)-2,6-diaminopimelate = meso-2,6-diaminopimelate. Its pathway is amino-acid biosynthesis; L-lysine biosynthesis via DAP pathway; DL-2,6-diaminopimelate from LL-2,6-diaminopimelate: step 1/1. Functionally, catalyzes the stereoinversion of LL-2,6-diaminopimelate (L,L-DAP) to meso-diaminopimelate (meso-DAP), a precursor of L-lysine and an essential component of the bacterial peptidoglycan. This is Diaminopimelate epimerase from Acinetobacter baylyi (strain ATCC 33305 / BD413 / ADP1).